The primary structure comprises 377 residues: Phosphatidylserine decarboxylase proenzyme, mitochondrial (377 aa).

The transit peptide at Met1–Leu34 directs the protein to the mitochondrion. Over Thr35–Lys61 the chain is Mitochondrial matrix. The helical transmembrane segment at Trp62–Phe80 threads the bilayer. Residues Thr81–Val377 are Mitochondrial intermembrane-facing. Residues Asp181, His238, and Ser344 each act as charge relay system; for autoendoproteolytic cleavage activity in the active site. Ser344 acts as the Schiff-base intermediate with substrate; via pyruvic acid; for decarboxylase activity in catalysis. Ser344 carries the pyruvic acid (Ser); by autocatalysis modification.

The protein belongs to the phosphatidylserine decarboxylase family. PSD-B subfamily. Eukaryotic type I sub-subfamily. As to quaternary structure, heterodimer of a large membrane-associated beta subunit and a small pyruvoyl-containing alpha subunit. Pyruvate is required as a cofactor. Post-translationally, is synthesized initially as an inactive proenzyme. Formation of the active enzyme involves a self-maturation process in which the active site pyruvoyl group is generated from an internal serine residue via an autocatalytic post-translational modification. Two non-identical subunits are generated from the proenzyme in this reaction, and the pyruvate is formed at the N-terminus of the alpha chain, which is derived from the carboxyl end of the proenzyme. The autoendoproteolytic cleavage occurs by a canonical serine protease mechanism, in which the side chain hydroxyl group of the serine supplies its oxygen atom to form the C-terminus of the beta chain, while the remainder of the serine residue undergoes an oxidative deamination to produce ammonia and the pyruvoyl prosthetic group on the alpha chain. During this reaction, the Ser that is part of the protease active site of the proenzyme becomes the pyruvoyl prosthetic group, which constitutes an essential element of the active site of the mature decarboxylase.

It localises to the mitochondrion inner membrane. It carries out the reaction a 1,2-diacyl-sn-glycero-3-phospho-L-serine + H(+) = a 1,2-diacyl-sn-glycero-3-phosphoethanolamine + CO2. Its pathway is phospholipid metabolism; phosphatidylethanolamine biosynthesis; phosphatidylethanolamine from CDP-diacylglycerol: step 2/2. Functionally, catalyzes the formation of phosphatidylethanolamine (PtdEtn) from phosphatidylserine (PtdSer). Plays a central role in phospholipid metabolism and in the interorganelle trafficking of phosphatidylserine. This Caenorhabditis elegans protein is Phosphatidylserine decarboxylase proenzyme, mitochondrial.